Here is a 139-residue protein sequence, read N- to C-terminus: Large ribosomal subunit protein uL16 (139 aa).

The span at 1–17 (MLMPKRVKYRKSQRGRM) shows a compositional bias: basic residues. A disordered region spans residues 1-24 (MLMPKRVKYRKSQRGRMKGNSGRG).

Belongs to the universal ribosomal protein uL16 family. In terms of assembly, part of the 50S ribosomal subunit.

Binds 23S rRNA and is also seen to make contacts with the A and possibly P site tRNAs. This chain is Large ribosomal subunit protein uL16, found in Chlorobium limicola (strain DSM 245 / NBRC 103803 / 6330).